A 1280-amino-acid chain; its full sequence is MWQILLAISIFSLSKLSNAQQQPKVAPPQITNFLAEDKVAPEEVKFRDTDVWQLVLPCRATGSNPLKWVWKHNNAEINKNKFIFDRDWELLSDGTLRARGLNISDRGTYQCFVEDTVTKVSTFSRKLRVEVTAVGDFKSHKDFTSSVKLGEPLNVECPPRGPSFGVTFAWTSKKARSIQFPISNRVAIDPSTGNLHIMYITEEDVSTFNDLEGIRCTISAANTFYSSGALTLQIIPGKEIKLSSPSFTSSTSSPNENAVEGRRKDLYCEATARPPPKLVWKKNGVELKSGIDFIEIPEAFEGRLLSITSVKESLHETTFTCEASNNQTIASGPAQQNFVLNVEVAPRWASKPPDSLKEIPISSNGNLSCDVYAQPEPEIKWYRDGREITQSSSKVEVSGSKLLFKDTTLDEAGIYQCSAENVHGMIVSSTYVKVLAIAPSFKNGFGPFYLFQDSEGRLKCDPEAAPRPSTFKWFDENGAEIKSGNGYTIEEDGTLVITKVERSQHAGKFSCYAKNFLGNATAEGTATVYDRTRIVRGPSDLSVNEGTRVDLRCEAVADSSLELHYTWKRDDATIEYNRRVQWLKDQNVLTIADLTVEDAGIYTCVAYTPQPKYSEAKASAIVNIAGAPFPPTNLMLSSECQNRNTTLSWVTGESNNASILYFLIERKSQYADDFWQVIANVTNPNATSHPLVKLAGNADLAFRIRAVNRFGPSRPSEPTGSFCRTIRAVPEKWPDNFRGVPGKAEELTIAWTAMRRVEWNGPGLYYKLWYRRVNSGDALVEVRREASSDSFVVPDAGYYRQWEFQIQAINEVGEGPKSPLVKQFSGQDPPTGKPEDVTVGTITARSVELSWKKVTFTRGSVDGYRIYFWGESRVSAKRRRRAIPGYASVTNVTGVNTERYTVTGLKPYTNYKFVITAYNSGGNGPESDQVAADTDEAEPGPPSDVQVFVFAKYILVTWQPPSEPNGVITNYRVGTETYTGSQPTDVTVNMEETGVEARRKLLRDLVPETNYVVEMQAATSKGWGTSFRKTEKTVAWAAPAKPEKPIVEGTAVDEVRVDYKFGLGGGYTHDFLVMFRKKIEGQEFQNTSWVDHFQQQSIIIGNLDPELYQFKTVARNDYPSQENPQESPASDITEARPRPGISNVGKRVSTPIYQSAWFIALLVLIALLLLVLLTFVLYTRHQGAKYLVGKREKKRAAALIDREHFDEEEGSFSNNGRADHPPPYPSQGSLPRGADSDRDSLDDYGEGPQFNEDGSFIEEYGDEKKAPPEEKDPSSLATFV.

A signal peptide spans 1-19; sequence MWQILLAISIFSLSKLSNA. Topologically, residues 20–1156 are extracellular; the sequence is QQQPKVAPPQ…RVSTPIYQSA (1137 aa). 5 cysteine pairs are disulfide-bonded: Cys58–Cys111, Cys268–Cys321, Cys369–Cys417, Cys460–Cys511, and Cys553–Cys604. Fibronectin type-III domains are found at residues 628–722, 730–824, 830–933, 939–1033, and 1039–1131; these read PFPP…TGSF, PEKW…VKQF, PTGK…VAAD, PGPP…TEKT, and PAKP…PASD. Residues 1118 to 1130 show a composition bias toward polar residues; the sequence is YPSQENPQESPAS. The tract at residues 1118–1144 is disordered; that stretch reads YPSQENPQESPASDITEARPRPGISNV. The helical transmembrane segment at 1157–1177 threads the bilayer; the sequence is WFIALLVLIALLLLVLLTFVL. The Cytoplasmic portion of the chain corresponds to 1178 to 1280; that stretch reads YTRHQGAKYL…KDPSSLATFV (103 aa). The segment at 1206–1280 is disordered; it reads DEEEGSFSNN…KDPSSLATFV (75 aa). Positions 1262–1273 are enriched in basic and acidic residues; sequence DEKKAPPEEKDP.

Component of the acid-insoluble organic matrix of the aragonitic skeleton (at protein level).

It is found in the membrane. This chain is Fibronectin type III domain-containing protein, found in Acropora millepora (Staghorn coral).